Here is a 585-residue protein sequence, read N- to C-terminus: Formate--tetrahydrofolate ligase (585 aa).

Residue 65–72 coordinates ATP; sequence TPHGEGKT.

This sequence belongs to the formate--tetrahydrofolate ligase family.

It catalyses the reaction (6S)-5,6,7,8-tetrahydrofolate + formate + ATP = (6R)-10-formyltetrahydrofolate + ADP + phosphate. Its pathway is one-carbon metabolism; tetrahydrofolate interconversion. The sequence is that of Formate--tetrahydrofolate ligase from Shewanella baltica (strain OS195).